We begin with the raw amino-acid sequence, 944 residues long: Isoleucine--tRNA ligase (944 aa).

A 'HIGH' region motif is present at residues 58–68 (PYANGQIHIGH). E568 lines the L-isoleucyl-5'-AMP pocket. The short motif at 609-613 (KMSKS) is the 'KMSKS' region element. K612 contributes to the ATP binding site. Positions 907, 910, 927, and 930 each coordinate Zn(2+).

This sequence belongs to the class-I aminoacyl-tRNA synthetase family. IleS type 1 subfamily. Monomer. Zn(2+) is required as a cofactor.

Its subcellular location is the cytoplasm. It carries out the reaction tRNA(Ile) + L-isoleucine + ATP = L-isoleucyl-tRNA(Ile) + AMP + diphosphate. Functionally, catalyzes the attachment of isoleucine to tRNA(Ile). As IleRS can inadvertently accommodate and process structurally similar amino acids such as valine, to avoid such errors it has two additional distinct tRNA(Ile)-dependent editing activities. One activity is designated as 'pretransfer' editing and involves the hydrolysis of activated Val-AMP. The other activity is designated 'posttransfer' editing and involves deacylation of mischarged Val-tRNA(Ile). This is Isoleucine--tRNA ligase from Idiomarina loihiensis (strain ATCC BAA-735 / DSM 15497 / L2-TR).